A 190-amino-acid chain; its full sequence is Potassium-transporting ATPase KdpC subunit (190 aa).

The helical transmembrane segment at 10-30 (TFLFLLLITGGVYPLLTTALG) threads the bilayer.

Belongs to the KdpC family. As to quaternary structure, the system is composed of three essential subunits: KdpA, KdpB and KdpC.

The protein resides in the cell inner membrane. Functionally, part of the high-affinity ATP-driven potassium transport (or Kdp) system, which catalyzes the hydrolysis of ATP coupled with the electrogenic transport of potassium into the cytoplasm. This subunit acts as a catalytic chaperone that increases the ATP-binding affinity of the ATP-hydrolyzing subunit KdpB by the formation of a transient KdpB/KdpC/ATP ternary complex. This chain is Potassium-transporting ATPase KdpC subunit, found in Escherichia fergusonii (strain ATCC 35469 / DSM 13698 / CCUG 18766 / IAM 14443 / JCM 21226 / LMG 7866 / NBRC 102419 / NCTC 12128 / CDC 0568-73).